The chain runs to 135 residues: Large ribosomal subunit protein eL32 (135 aa).

It belongs to the eukaryotic ribosomal protein eL32 family.

This chain is Large ribosomal subunit protein eL32, found in Methanococcus maripaludis (strain C6 / ATCC BAA-1332).